The primary structure comprises 430 residues: MRRWLTSRLYDAFLVAAFLAAAPRIFYKVVFHGKYINSWKIRFGVEKPQVKGEGPLVWFHGASVGEVSLLEPLLKKWRQEFPDWRFVVTACSEAGVYTAQRLYAPLGATVFVLPLDLSCIINPVVRSLSPQVVIFSEGDCWLHFLMGAKKLGAKAFLINGKLSENSCKRFAFLKRLGRSYFAPLDLLVLQDKVYKQRFMQIGIPEDKIQISGNLKTFIETETSINNRSLWRKKLKLSPSDRLIVLGSMHPKDVEVWADVAQHFNKFSTKILWVPRHLEKLKEHARLLEKAGISFGLWSKEDSLLQYDSLIVDAMGILKDLYSAADLAFVGGTFDPLVGGHNLLEPLQKEVPLMFGPHIHSQSVLAELLRTKEVGVSVDKENLLEAVENLLEDEKKRQAYIERGKSFLKNAGTSFEHTWEILKSQIACIKI.

The chain crosses the membrane as a helical; Signal-anchor span at residues A12–H32. The active-site Proton acceptor is the E66. Residues P274–R275, M314–I316, and N341–E344 contribute to the CMP site.

It belongs to the glycosyltransferase group 1 family. Glycosyltransferase 30 subfamily.

It is found in the cell inner membrane. The catalysed reaction is lipid IVA (E. coli) + CMP-3-deoxy-beta-D-manno-octulosonate = alpha-Kdo-(2-&gt;6)-lipid IVA (E. coli) + CMP + H(+). The enzyme catalyses alpha-Kdo-(2-&gt;6)-lipid IVA (E. coli) + CMP-3-deoxy-beta-D-manno-octulosonate = alpha-Kdo-(2-&gt;4)-alpha-Kdo-(2-&gt;6)-lipid IVA (E. coli) + CMP + H(+). It catalyses the reaction alpha-Kdo-(2-&gt;4)-alpha-Kdo-(2-&gt;6)-lipid IVA (E. coli) + CMP-3-deoxy-beta-D-manno-octulosonate = alpha-Kdo-(2-&gt;8)-alpha-Kdo-(2-&gt;4)-alpha-Kdo-(2-&gt;6)-lipid IVA (E. coli) + CMP + H(+). It functions in the pathway bacterial outer membrane biogenesis; LPS core biosynthesis. In terms of biological role, involved in lipopolysaccharide (LPS) biosynthesis. Catalyzes the transfer of three 3-deoxy-D-manno-octulosonate (Kdo) residues from CMP-Kdo to lipid IV(A), the tetraacyldisaccharide-1,4'-bisphosphate precursor of lipid A. Thus generates the genus-specific LPS epitope of Chlamydia, composed of the trisaccharide alpha-Kdo-(2-&gt;8)-alpha-Kdo-(2-&gt;4)-alpha-Kdo. The sequence is that of 3-deoxy-D-manno-octulosonic acid transferase (waaA) from Chlamydia muridarum (strain MoPn / Nigg).